A 347-amino-acid chain; its full sequence is MNPPILAIVMSTVISGTIMVLISSHWLTIWIGFEMNMLAIIPILMKKFNPRAMEASTKYFLTQATASMLLMLGIIINLLLTGQWTVLNMPNPVASNMMTAALAMKLGLSPFHFWVPEVTQGVPMSSGMILLTWQKIAPLSILYQIAPSMNPNLLMAMAIMSVLVGGWGGLNQTQLRKILAYSSIAHMGWMIAVTTYNPTLMLLNLTIYITMTLGTFMLFMLNSSTTTLSLSHTWNKLPLIASLILMTMLSLGGLPPLSGFIPKWMIIHELTKNDMAIMATFMAMTALLNLYFYMRLTYATALTMFPSTNIMKMKWQFESTKNTTLLPPLIMISTMLLPLTPMVLTLF.

9 helical membrane-spanning segments follow: residues 5–22 (ILAI…MVLI), 26–45 (WLTI…PILM), 60–80 (FLTQ…NLLL), 150–170 (NPNL…WGGL), 178–198 (ILAY…TYNP), 200–220 (LMLL…MLFM), 237–257 (LPLI…LPPL), 274–294 (DMAI…YFYM), and 327–347 (PPLI…LTLF).

The protein belongs to the complex I subunit 2 family. In terms of assembly, core subunit of respiratory chain NADH dehydrogenase (Complex I) which is composed of 45 different subunits. Interacts with TMEM242.

It is found in the mitochondrion inner membrane. It catalyses the reaction a ubiquinone + NADH + 5 H(+)(in) = a ubiquinol + NAD(+) + 4 H(+)(out). In terms of biological role, core subunit of the mitochondrial membrane respiratory chain NADH dehydrogenase (Complex I) which catalyzes electron transfer from NADH through the respiratory chain, using ubiquinone as an electron acceptor. Essential for the catalytic activity and assembly of complex I. In Martes zibellina (Sable), this protein is NADH-ubiquinone oxidoreductase chain 2.